Here is a 267-residue protein sequence, read N- to C-terminus: L-aspartate dehydrogenase 2 (267 aa).

2 residues coordinate NAD(+): Ala-123 and Asn-189. His-219 is a catalytic residue.

Belongs to the L-aspartate dehydrogenase family.

The catalysed reaction is L-aspartate + NADP(+) + H2O = oxaloacetate + NH4(+) + NADPH + H(+). It catalyses the reaction L-aspartate + NAD(+) + H2O = oxaloacetate + NH4(+) + NADH + H(+). Its pathway is cofactor biosynthesis; NAD(+) biosynthesis; iminoaspartate from L-aspartate (dehydrogenase route): step 1/1. In terms of biological role, specifically catalyzes the NAD or NADP-dependent dehydrogenation of L-aspartate to iminoaspartate. The protein is L-aspartate dehydrogenase 2 of Bordetella bronchiseptica (strain ATCC BAA-588 / NCTC 13252 / RB50) (Alcaligenes bronchisepticus).